Here is a 147-residue protein sequence, read N- to C-terminus: Small ribosomal subunit protein uS12 (147 aa).

It belongs to the universal ribosomal protein uS12 family. Part of the 30S ribosomal subunit.

Functionally, with S4 and S5 plays an important role in translational accuracy. Located at the interface of the 30S and 50S subunits. The polypeptide is Small ribosomal subunit protein uS12 (Sulfurisphaera tokodaii (strain DSM 16993 / JCM 10545 / NBRC 100140 / 7) (Sulfolobus tokodaii)).